We begin with the raw amino-acid sequence, 229 residues long: Large ribosomal subunit protein uL1 (229 aa).

Belongs to the universal ribosomal protein uL1 family. In terms of assembly, part of the 50S ribosomal subunit.

In terms of biological role, binds directly to 23S rRNA. The L1 stalk is quite mobile in the ribosome, and is involved in E site tRNA release. Protein L1 is also a translational repressor protein, it controls the translation of the L11 operon by binding to its mRNA. In Rhodopseudomonas palustris (strain BisB5), this protein is Large ribosomal subunit protein uL1.